We begin with the raw amino-acid sequence, 131 residues long: Large ribosomal subunit protein bL17 (131 aa).

This sequence belongs to the bacterial ribosomal protein bL17 family. As to quaternary structure, part of the 50S ribosomal subunit. Contacts protein L32.

This is Large ribosomal subunit protein bL17 from Nitrosospira multiformis (strain ATCC 25196 / NCIMB 11849 / C 71).